We begin with the raw amino-acid sequence, 158 residues long: Cathelicidin-6 (158 aa).

An N-terminal signal peptide occupies residues 1–29; it reads METQRASLSLGRWSLWLLLLGLALPSASA. Residues 30-131 constitute a propeptide that is removed on maturation; that stretch reads QALSYREAVL…NVTCEELQSV (102 aa). Disulfide bonds link C86–C97 and C108–C125.

The protein belongs to the cathelicidin family.

The protein localises to the secreted. Functionally, exerts a potent antimicrobial activity against Gram-negative and Gram-positive bacteria, including methicillin-resistant Staphylococcus aureus, and fungi. In Bos taurus (Bovine), this protein is Cathelicidin-6 (CATHL6).